Here is a 361-residue protein sequence, read N- to C-terminus: Probable dual-specificity RNA methyltransferase RlmN (361 aa).

E91 serves as the catalytic Proton acceptor. One can recognise a Radical SAM core domain in the interval 97 to 329 (QHYGLSVCVT…KKKGGNCVVR (233 aa)). Residues C104 and C340 are joined by a disulfide bond. [4Fe-4S] cluster-binding residues include C111, C115, and C118. S-adenosyl-L-methionine is bound by residues 163–164 (GE), S195, 218–220 (SLH), and N296. The active-site S-methylcysteine intermediate is C340.

Belongs to the radical SAM superfamily. RlmN family. [4Fe-4S] cluster serves as cofactor.

Its subcellular location is the cytoplasm. It catalyses the reaction adenosine(2503) in 23S rRNA + 2 reduced [2Fe-2S]-[ferredoxin] + 2 S-adenosyl-L-methionine = 2-methyladenosine(2503) in 23S rRNA + 5'-deoxyadenosine + L-methionine + 2 oxidized [2Fe-2S]-[ferredoxin] + S-adenosyl-L-homocysteine. The catalysed reaction is adenosine(37) in tRNA + 2 reduced [2Fe-2S]-[ferredoxin] + 2 S-adenosyl-L-methionine = 2-methyladenosine(37) in tRNA + 5'-deoxyadenosine + L-methionine + 2 oxidized [2Fe-2S]-[ferredoxin] + S-adenosyl-L-homocysteine. In terms of biological role, specifically methylates position 2 of adenine 2503 in 23S rRNA and position 2 of adenine 37 in tRNAs. This is Probable dual-specificity RNA methyltransferase RlmN from Streptococcus pneumoniae (strain P1031).